Here is a 353-residue protein sequence, read N- to C-terminus: Photosystem II protein D1 (353 aa).

Thr-2 is subject to N-acetylthreonine. Thr-2 is subject to Phosphothreonine. 3 consecutive transmembrane segments (helical) span residues 29–46, 118–133, and 142–156; these read YIGW…TATS, HFLL…EWEL, and WIVV…AATA. Position 118 (His-118) interacts with chlorophyll a. A pheophytin a-binding site is contributed by Tyr-126. The [CaMn4O5] cluster site is built by Asp-170 and Glu-189. The helical transmembrane segment at 197 to 218 threads the bilayer; the sequence is FHMLGVAGVFGGSLFSAMHGSL. His-198 contributes to the chlorophyll a binding site. A quinone contacts are provided by residues His-215 and 264–265; that span reads SF. His-215 provides a ligand contact to Fe cation. His-272 provides a ligand contact to Fe cation. The chain crosses the membrane as a helical span at residues 274 to 288; it reads FLAAWPVVGIWFTAL. Positions 332, 333, 342, and 344 each coordinate [CaMn4O5] cluster. A propeptide spanning residues 345-353 is cleaved from the precursor; the sequence is AVDAPSISG.

The protein belongs to the reaction center PufL/M/PsbA/D family. In terms of assembly, PSII is composed of 1 copy each of membrane proteins PsbA, PsbB, PsbC, PsbD, PsbE, PsbF, PsbH, PsbI, PsbJ, PsbK, PsbL, PsbM, PsbT, PsbX, PsbY, PsbZ, Psb30/Ycf12, at least 3 peripheral proteins of the oxygen-evolving complex and a large number of cofactors. It forms dimeric complexes. The cofactor is The D1/D2 heterodimer binds P680, chlorophylls that are the primary electron donor of PSII, and subsequent electron acceptors. It shares a non-heme iron and each subunit binds pheophytin, quinone, additional chlorophylls, carotenoids and lipids. D1 provides most of the ligands for the Mn4-Ca-O5 cluster of the oxygen-evolving complex (OEC). There is also a Cl(-1) ion associated with D1 and D2, which is required for oxygen evolution. The PSII complex binds additional chlorophylls, carotenoids and specific lipids.. In terms of processing, tyr-161 forms a radical intermediate that is referred to as redox-active TyrZ, YZ or Y-Z. Post-translationally, C-terminally processed by CTPA; processing is essential to allow assembly of the oxygen-evolving complex and thus photosynthetic growth.

The protein localises to the plastid. It is found in the chloroplast thylakoid membrane. The enzyme catalyses 2 a plastoquinone + 4 hnu + 2 H2O = 2 a plastoquinol + O2. Its function is as follows. Photosystem II (PSII) is a light-driven water:plastoquinone oxidoreductase that uses light energy to abstract electrons from H(2)O, generating O(2) and a proton gradient subsequently used for ATP formation. It consists of a core antenna complex that captures photons, and an electron transfer chain that converts photonic excitation into a charge separation. The D1/D2 (PsbA/PsbD) reaction center heterodimer binds P680, the primary electron donor of PSII as well as several subsequent electron acceptors. This is Photosystem II protein D1 from Vicia faba (Broad bean).